We begin with the raw amino-acid sequence, 499 residues long: Bifunctional purine biosynthesis protein PurH (499 aa).

The 144-residue stretch at 1–144 (MIKRALISVF…KNFKDVVVLT (144 aa)) folds into the MGS-like domain.

Belongs to the PurH family.

It carries out the reaction (6R)-10-formyltetrahydrofolate + 5-amino-1-(5-phospho-beta-D-ribosyl)imidazole-4-carboxamide = 5-formamido-1-(5-phospho-D-ribosyl)imidazole-4-carboxamide + (6S)-5,6,7,8-tetrahydrofolate. It catalyses the reaction IMP + H2O = 5-formamido-1-(5-phospho-D-ribosyl)imidazole-4-carboxamide. The protein operates within purine metabolism; IMP biosynthesis via de novo pathway; 5-formamido-1-(5-phospho-D-ribosyl)imidazole-4-carboxamide from 5-amino-1-(5-phospho-D-ribosyl)imidazole-4-carboxamide (10-formyl THF route): step 1/1. It participates in purine metabolism; IMP biosynthesis via de novo pathway; IMP from 5-formamido-1-(5-phospho-D-ribosyl)imidazole-4-carboxamide: step 1/1. The protein is Bifunctional purine biosynthesis protein PurH of Clostridium botulinum (strain 657 / Type Ba4).